Reading from the N-terminus, the 235-residue chain is Eukaryotic translation initiation factor 4E-1 (235 aa).

Residues 1-52 are disordered; sequence MVVEDSMKATSAEDLSNSIANQNPRGRGGDEDEELEEGEIVGDDDLDSSNLS. The segment covering 13–24 has biased composition (polar residues); that stretch reads EDLSNSIANQNP. Over residues 30-47 the composition is skewed to acidic residues; it reads DEDEELEEGEIVGDDDLD. 2 EIF4G-binding regions span residues 60–63 and 70–106; these read HPLE and FDNPSAKSKQATWGASIRPIYTFSTVEEFWSVYNNIH. MRNA-binding positions include 78-83, K110, and 128-129; these read KQATWG and WE. A disulfide bridge links C133 with C171. The interval 154–163 is EIF4G-binding; the sequence is YTLLAMIGEQ. MRNA-binding positions include 178–183 and 223–227; these read RSGQDK and KKFDR.

It belongs to the eukaryotic initiation factor 4E family. In terms of assembly, EIF4F is a multi-subunit complex, the composition of which varies with external and internal environmental conditions. It is composed of at least EIF4A, EIF4E and EIF4G. EIF4E is also known to interact with other partners. Interacts directly with eIF4G. In higher plants two isoforms of EIF4F have been identified, named isoform EIF4F and isoform EIF(iso)4F. Isoform EIF4F has subunits p220 and p26, whereas isoform EIF(iso)4F has subunits p82 and p28. (Microbial infection) Interacts with potyvirus viral genome-linked protein (VPg); this interaction is possible in susceptible hosts but impaired in resistant plants. According to the redox status, the Cys-133-Cys-171 disulfide bridge may have a role in regulating protein function by affecting its ability to bind capped mRNA.

It is found in the nucleus. The protein localises to the cytoplasm. In terms of biological role, component of the protein complex eIF4F, which is involved in the recognition of the mRNA cap, ATP-dependent unwinding of 5'-terminal secondary structure and recruitment of mRNA to the ribosome. Recognizes and binds the 7-methylguanosine-containing mRNA cap during an early step in the initiation of protein synthesis and facilitates ribosome binding by inducing the unwinding of the mRNAs secondary structures. Key component of recessive resistance to potyviruses and Tombusviridae genus Carmovirus such as melon necrotic spot virus (MNSV). Functionally, (Microbial infection) Susceptibility host factor required for viral infection by recruiting viral RNAs, including uncapped and non-polyadenylated RNA, to the host ribosomal complex via an interaction with viral genome-linked protein (VPg). This is Eukaryotic translation initiation factor 4E-1 from Cucumis melo (Muskmelon).